The chain runs to 262 residues: Indole-3-glycerol phosphate synthase (262 aa).

This sequence belongs to the TrpC family.

The catalysed reaction is 1-(2-carboxyphenylamino)-1-deoxy-D-ribulose 5-phosphate + H(+) = (1S,2R)-1-C-(indol-3-yl)glycerol 3-phosphate + CO2 + H2O. The protein operates within amino-acid biosynthesis; L-tryptophan biosynthesis; L-tryptophan from chorismate: step 4/5. The protein is Indole-3-glycerol phosphate synthase of Nitratiruptor sp. (strain SB155-2).